The sequence spans 63 residues: Cysteine-rich venom protein 3 (63 aa).

Residues 1 to 25 (MRKPITLILVVALALVLLATSEVSA) form the signal peptide. Cystine bridges form between C29/C43, C36/C48, and C42/C58.

As to expression, expressed by the venom gland.

It localises to the secreted. This Pimpla hypochondriaca (Parasitoid wasp) protein is Cysteine-rich venom protein 3.